The sequence spans 280 residues: Proteasome subunit beta (280 aa).

Residues 1-53 (MSEYSAGRSGFSPAYLDRVGSSFTDFLAAAAPHLLPGSRPVPQIPVGNVTPHG) constitute a propeptide, removed in mature form; by autocatalysis. Thr-54 serves as the catalytic Nucleophile.

The protein belongs to the peptidase T1B family. The 20S proteasome core is composed of 14 alpha and 14 beta subunits that assemble into four stacked heptameric rings, resulting in a barrel-shaped structure. The two inner rings, each composed of seven catalytic beta subunits, are sandwiched by two outer rings, each composed of seven alpha subunits. The catalytic chamber with the active sites is on the inside of the barrel. Has a gated structure, the ends of the cylinder being occluded by the N-termini of the alpha-subunits. Is capped by the proteasome-associated ATPase, ARC.

It localises to the cytoplasm. The catalysed reaction is Cleavage of peptide bonds with very broad specificity.. The protein operates within protein degradation; proteasomal Pup-dependent pathway. Its activity is regulated as follows. The formation of the proteasomal ATPase ARC-20S proteasome complex, likely via the docking of the C-termini of ARC into the intersubunit pockets in the alpha-rings, may trigger opening of the gate for substrate entry. Interconversion between the open-gate and close-gate conformations leads to a dynamic regulation of the 20S proteasome proteolysis activity. Component of the proteasome core, a large protease complex with broad specificity involved in protein degradation. In Geodermatophilus obscurus (strain ATCC 25078 / DSM 43160 / JCM 3152 / CCUG 61914 / KCC A-0152 / KCTC 9177 / NBRC 13315 / NRRL B-3577 / G-20), this protein is Proteasome subunit beta.